Reading from the N-terminus, the 599-residue chain is DNA primase (599 aa).

Residues 38–62 (CPFHDEKTPSFTVSEDKQICHCFGC) form a CHC2-type zinc finger. The Toprim domain occupies 260–341 (DEIVLLEGFM…NVFVIQLPSG (82 aa)). The Mg(2+) site is built by Glu266, Asp310, and Asp312.

The protein belongs to the DnaG primase family. As to quaternary structure, monomer. Interacts with DnaB. Zn(2+) is required as a cofactor. It depends on Mg(2+) as a cofactor.

The catalysed reaction is ssDNA + n NTP = ssDNA/pppN(pN)n-1 hybrid + (n-1) diphosphate.. RNA polymerase that catalyzes the synthesis of short RNA molecules used as primers for DNA polymerase during DNA replication. In Staphylococcus aureus (strain COL), this protein is DNA primase.